The sequence spans 288 residues: MDKLNAISIFCKVIETQSFTLAAKQQNISVAMASKLVSQLEEHLKTRLLQRTTRKIMPTEAGMMYYQRCQGILLDLDEADSSITQLTSSLQGNLLISVPRDFGLLFIAPNLPTFMAKHPHLHIEVEFNDKKIDLLSEGYDLALRIGYMEDSSLVSRKIGTTTVHFAASPNYLETNGIPQTPDDLEHHNGLLYKNAMNQVNWVGSRINQTQRFKIQSKVVSNSGFALLNMAKAGLGIANLPKFILGRAFEKGELIEILPEYKQQKLEIHVVYPNRRHLPIKVTGISLNF.

Residues 1–59 (MDKLNAISIFCKVIETQSFTLAAKQQNISVAMASKLVSQLEEHLKTRLLQRTTRKIMPT) form the HTH lysR-type domain. The H-T-H motif DNA-binding region spans 19-38 (FTLAAKQQNISVAMASKLVS).

It belongs to the LysR transcriptional regulatory family.

This is an uncharacterized protein from Haemophilus influenzae (strain ATCC 51907 / DSM 11121 / KW20 / Rd).